Reading from the N-terminus, the 475-residue chain is Ribulose bisphosphate carboxylase large chain (475 aa).

A propeptide spanning residues 1-2 (MS) is cleaved from the precursor. Pro-3 carries the post-translational modification N-acetylproline. Lys-14 carries the N6,N6,N6-trimethyllysine modification. 2 residues coordinate substrate: Asn-123 and Thr-173. Residue Lys-175 is the Proton acceptor of the active site. Lys-177 is a substrate binding site. Lys-201, Asp-203, and Glu-204 together coordinate Mg(2+). At Lys-201 the chain carries N6-carboxylysine. The active-site Proton acceptor is the His-294. Substrate-binding residues include Arg-295, His-327, and Ser-379.

Belongs to the RuBisCO large chain family. Type I subfamily. In terms of assembly, heterohexadecamer of 8 large chains and 8 small chains; disulfide-linked. The disulfide link is formed within the large subunit homodimers. Requires Mg(2+) as cofactor. Post-translationally, the disulfide bond which can form in the large chain dimeric partners within the hexadecamer appears to be associated with oxidative stress and protein turnover.

It localises to the plastid. The protein localises to the chloroplast. It catalyses the reaction 2 (2R)-3-phosphoglycerate + 2 H(+) = D-ribulose 1,5-bisphosphate + CO2 + H2O. The enzyme catalyses D-ribulose 1,5-bisphosphate + O2 = 2-phosphoglycolate + (2R)-3-phosphoglycerate + 2 H(+). RuBisCO catalyzes two reactions: the carboxylation of D-ribulose 1,5-bisphosphate, the primary event in carbon dioxide fixation, as well as the oxidative fragmentation of the pentose substrate in the photorespiration process. Both reactions occur simultaneously and in competition at the same active site. This is Ribulose bisphosphate carboxylase large chain from Picea sitchensis (Sitka spruce).